The primary structure comprises 276 residues: 2-dehydro-3-deoxyphosphooctonate aldolase (276 aa).

This sequence belongs to the KdsA family.

The protein localises to the cytoplasm. It catalyses the reaction D-arabinose 5-phosphate + phosphoenolpyruvate + H2O = 3-deoxy-alpha-D-manno-2-octulosonate-8-phosphate + phosphate. The protein operates within carbohydrate biosynthesis; 3-deoxy-D-manno-octulosonate biosynthesis; 3-deoxy-D-manno-octulosonate from D-ribulose 5-phosphate: step 2/3. It functions in the pathway bacterial outer membrane biogenesis; lipopolysaccharide biosynthesis. This is 2-dehydro-3-deoxyphosphooctonate aldolase from Helicobacter acinonychis (strain Sheeba).